We begin with the raw amino-acid sequence, 184 residues long: Protein GrpE (184 aa).

Polar residues predominate over residues 1–14 (MANEQNEQSQDLSS). Residues 1–35 (MANEQNEQSQDLSSEQTTQDHEQTQTEGVEQGAEI) form a disordered region.

The protein belongs to the GrpE family. Homodimer.

It is found in the cytoplasm. Participates actively in the response to hyperosmotic and heat shock by preventing the aggregation of stress-denatured proteins, in association with DnaK and GrpE. It is the nucleotide exchange factor for DnaK and may function as a thermosensor. Unfolded proteins bind initially to DnaJ; upon interaction with the DnaJ-bound protein, DnaK hydrolyzes its bound ATP, resulting in the formation of a stable complex. GrpE releases ADP from DnaK; ATP binding to DnaK triggers the release of the substrate protein, thus completing the reaction cycle. Several rounds of ATP-dependent interactions between DnaJ, DnaK and GrpE are required for fully efficient folding. The sequence is that of Protein GrpE from Acinetobacter baylyi (strain ATCC 33305 / BD413 / ADP1).